The following is a 395-amino-acid chain: Non-homologous end joining protein Ku (395 aa).

A Ku domain is found at 9-181; sequence ISFGLVSIPI…PPEDAAPDGD (173 aa). The segment at 252-395 is disordered; sequence RAARTSRDDE…SASSRKRTSA (144 aa). Composition is skewed to polar residues over residues 283–292 and 311–320; these read SSKTSGQSSG and GKTVTRSGDS. Basic residues predominate over residues 351–361; sequence TARKTTAKKTT. Positions 362–371 are enriched in low complexity; that stretch reads AKGTTGTTAA.

This sequence belongs to the prokaryotic Ku family. In terms of assembly, homodimer. Interacts with LigD.

With LigD forms a non-homologous end joining (NHEJ) DNA repair enzyme, which repairs dsDNA breaks with reduced fidelity. Binds linear dsDNA with 5'- and 3'- overhangs but not closed circular dsDNA nor ssDNA. Recruits and stimulates the ligase activity of LigD. The polypeptide is Non-homologous end joining protein Ku (Streptomyces griseus subsp. griseus (strain JCM 4626 / CBS 651.72 / NBRC 13350 / KCC S-0626 / ISP 5235)).